A 166-amino-acid chain; its full sequence is Lipoprotein signal peptidase (166 aa).

A run of 4 helical transmembrane segments spans residues 9–29 (ASGALAPWLGISLIVILFDQL), 45–65 (ALTSFFNLVLVYNRGAAFGFL), 71–91 (WQRWAFTALGIGATLVICYLL), and 99–119 (LFSLSLALILGGALGNVIDRL). Catalysis depends on residues aspartate 126 and aspartate 144. Residues 135 to 155 (WHFPAFNLADSAITVGAVLLI) traverse the membrane as a helical segment.

The protein belongs to the peptidase A8 family.

Its subcellular location is the cell inner membrane. The enzyme catalyses Release of signal peptides from bacterial membrane prolipoproteins. Hydrolyzes -Xaa-Yaa-Zaa-|-(S,diacylglyceryl)Cys-, in which Xaa is hydrophobic (preferably Leu), and Yaa (Ala or Ser) and Zaa (Gly or Ala) have small, neutral side chains.. Its pathway is protein modification; lipoprotein biosynthesis (signal peptide cleavage). Its function is as follows. This protein specifically catalyzes the removal of signal peptides from prolipoproteins. In Burkholderia vietnamiensis (strain G4 / LMG 22486) (Burkholderia cepacia (strain R1808)), this protein is Lipoprotein signal peptidase.